The primary structure comprises 271 residues: Phosphatidylglycerol--prolipoprotein diacylglyceryl transferase (271 aa).

A run of 7 helical transmembrane segments spans residues 25-45, 60-80, 103-123, 134-154, 181-201, 209-229, and 235-255; these read WYGI…KFFV, YFIW…ILIY, FVGI…IATL, WIFL…GRIG, PSQL…VYLA, GELI…CEFY, and GIGF…IMFI. R152 contacts a 1,2-diacyl-sn-glycero-3-phospho-(1'-sn-glycerol).

The protein belongs to the Lgt family.

Its subcellular location is the cell inner membrane. It carries out the reaction L-cysteinyl-[prolipoprotein] + a 1,2-diacyl-sn-glycero-3-phospho-(1'-sn-glycerol) = an S-1,2-diacyl-sn-glyceryl-L-cysteinyl-[prolipoprotein] + sn-glycerol 1-phosphate + H(+). It functions in the pathway protein modification; lipoprotein biosynthesis (diacylglyceryl transfer). Catalyzes the transfer of the diacylglyceryl group from phosphatidylglycerol to the sulfhydryl group of the N-terminal cysteine of a prolipoprotein, the first step in the formation of mature lipoproteins. The sequence is that of Phosphatidylglycerol--prolipoprotein diacylglyceryl transferase from Campylobacter jejuni subsp. jejuni serotype O:23/36 (strain 81-176).